The primary structure comprises 798 residues: Glycogen phosphorylase (798 aa).

Position 646 is an N6-(pyridoxal phosphate)lysine (K646).

Belongs to the glycogen phosphorylase family. It depends on pyridoxal 5'-phosphate as a cofactor.

The enzyme catalyses [(1-&gt;4)-alpha-D-glucosyl](n) + phosphate = [(1-&gt;4)-alpha-D-glucosyl](n-1) + alpha-D-glucose 1-phosphate. Functionally, phosphorylase is an important allosteric enzyme in carbohydrate metabolism. Enzymes from different sources differ in their regulatory mechanisms and in their natural substrates. However, all known phosphorylases share catalytic and structural properties. The sequence is that of Glycogen phosphorylase (glgP) from Bacillus subtilis (strain 168).